Here is a 307-residue protein sequence, read N- to C-terminus: NAD kinase (307 aa).

Asp-78 (proton acceptor) is an active-site residue. Residues 78-79 (DG), His-83, 154-155 (NE), Arg-165, Arg-182, Asp-184, and Gln-255 each bind NAD(+).

Belongs to the NAD kinase family. A divalent metal cation serves as cofactor.

The protein localises to the cytoplasm. It carries out the reaction NAD(+) + ATP = ADP + NADP(+) + H(+). In terms of biological role, involved in the regulation of the intracellular balance of NAD and NADP, and is a key enzyme in the biosynthesis of NADP. Catalyzes specifically the phosphorylation on 2'-hydroxyl of the adenosine moiety of NAD to yield NADP. The polypeptide is NAD kinase (Halorhodospira halophila (strain DSM 244 / SL1) (Ectothiorhodospira halophila (strain DSM 244 / SL1))).